Reading from the N-terminus, the 706-residue chain is Axin-related protein (706 aa).

The RGS domain maps to 72-191 (SLNLLLDDQD…LQSDICKEYA (120 aa)). 3 disordered regions span residues 278 to 298 (MTDG…REIH), 400 to 482 (TPAN…GTSA), and 585 to 605 (STTL…GFST). Positions 402 to 412 (ANLSPRSQSPF) are enriched in polar residues. Over residues 453 to 462 (RSSVSSQLPR) the composition is skewed to low complexity. Positions 624 to 706 (GQGLAIVYYF…KIICKVERAC (83 aa)) constitute a DIX domain.

As to quaternary structure, interacts with dvl2/dsh via DIX domains in both proteins. Forms a complex with ctnnb1/beta-catenin and gsk3b. Also forms heterodimers with mouse Axin1.

It is found in the cytoplasm. The protein resides in the cytoplasmic vesicle. Functionally, regulates the wnt signaling pathway by interacting with dvl2/dsh, which displaces gsk3b from the axnr-gsk3b complex and thus prevents degradation of ctnnb1/beta-catenin. The chain is Axin-related protein from Xenopus laevis (African clawed frog).